The chain runs to 93 residues: Muconolactone Delta-isomerase (93 aa).

Belongs to the muconolactone Delta-isomerase family. As to quaternary structure, homodecamer.

The enzyme catalyses (S)-muconolactone = (4,5-dihydro-5-oxofuran-2-yl)-acetate. The protein operates within aromatic compound metabolism; beta-ketoadipate pathway; 5-oxo-4,5-dihydro-2-furylacetate from catechol: step 3/3. This is Muconolactone Delta-isomerase (catC) from Rhodococcus opacus (Nocardia opaca).